Consider the following 139-residue polypeptide: Nucleoside diphosphate kinase (139 aa).

The ATP site is built by K10, F58, R86, T92, R104, and N114. H117 functions as the Pros-phosphohistidine intermediate in the catalytic mechanism.

The protein belongs to the NDK family. Homotetramer. The cofactor is Mg(2+).

Its subcellular location is the cytoplasm. The catalysed reaction is a 2'-deoxyribonucleoside 5'-diphosphate + ATP = a 2'-deoxyribonucleoside 5'-triphosphate + ADP. The enzyme catalyses a ribonucleoside 5'-diphosphate + ATP = a ribonucleoside 5'-triphosphate + ADP. Major role in the synthesis of nucleoside triphosphates other than ATP. The ATP gamma phosphate is transferred to the NDP beta phosphate via a ping-pong mechanism, using a phosphorylated active-site intermediate. The protein is Nucleoside diphosphate kinase of Rhodococcus opacus (strain B4).